Reading from the N-terminus, the 484-residue chain is Siroheme synthase 1 (484 aa).

A precorrin-2 dehydrogenase /sirohydrochlorin ferrochelatase region spans residues 1-205 (MHHYPIFLKL…GREAEGEAEL (205 aa)). Residues 22–23 (EA) and 43–44 (PV) each bind NAD(+). The residue at position 130 (serine 130) is a Phosphoserine. The segment at 220–484 (GEVFLVGAGP…DPCWTGGMRD (265 aa)) is uroporphyrinogen-III C-methyltransferase. S-adenosyl-L-methionine is bound at residue proline 229. Aspartate 252 functions as the Proton acceptor in the catalytic mechanism. Residue lysine 274 is the Proton donor of the active site. S-adenosyl-L-methionine-binding positions include 305–307 (GGD), leucine 310, 335–336 (SA), methionine 387, and alanine 416.

It in the N-terminal section; belongs to the precorrin-2 dehydrogenase / sirohydrochlorin ferrochelatase family. This sequence in the C-terminal section; belongs to the precorrin methyltransferase family.

It catalyses the reaction uroporphyrinogen III + 2 S-adenosyl-L-methionine = precorrin-2 + 2 S-adenosyl-L-homocysteine + H(+). The catalysed reaction is precorrin-2 + NAD(+) = sirohydrochlorin + NADH + 2 H(+). The enzyme catalyses siroheme + 2 H(+) = sirohydrochlorin + Fe(2+). The protein operates within cofactor biosynthesis; adenosylcobalamin biosynthesis; precorrin-2 from uroporphyrinogen III: step 1/1. It functions in the pathway cofactor biosynthesis; adenosylcobalamin biosynthesis; sirohydrochlorin from precorrin-2: step 1/1. Its pathway is porphyrin-containing compound metabolism; siroheme biosynthesis; precorrin-2 from uroporphyrinogen III: step 1/1. It participates in porphyrin-containing compound metabolism; siroheme biosynthesis; siroheme from sirohydrochlorin: step 1/1. The protein operates within porphyrin-containing compound metabolism; siroheme biosynthesis; sirohydrochlorin from precorrin-2: step 1/1. Functionally, multifunctional enzyme that catalyzes the SAM-dependent methylations of uroporphyrinogen III at position C-2 and C-7 to form precorrin-2 via precorrin-1. Then it catalyzes the NAD-dependent ring dehydrogenation of precorrin-2 to yield sirohydrochlorin. Finally, it catalyzes the ferrochelation of sirohydrochlorin to yield siroheme. The polypeptide is Siroheme synthase 1 (Halorhodospira halophila (strain DSM 244 / SL1) (Ectothiorhodospira halophila (strain DSM 244 / SL1))).